The following is a 301-amino-acid chain: Tyrosine recombinase XerC (301 aa).

In terms of domain architecture, Core-binding (CB) spans 2–84 (TNTQFYITNF…TLRSFFSYLY (83 aa)). In terms of domain architecture, Tyr recombinase spans 105–291 (ALPKFLTVDD…DLKHLIEVYD (187 aa)). Active-site residues include arginine 145, lysine 169, histidine 243, arginine 246, and histidine 269. Tyrosine 278 (O-(3'-phospho-DNA)-tyrosine intermediate) is an active-site residue.

This sequence belongs to the 'phage' integrase family. XerC subfamily. In terms of assembly, forms a cyclic heterotetrameric complex composed of two molecules of XerC and two molecules of XerD.

It is found in the cytoplasm. In terms of biological role, site-specific tyrosine recombinase, which acts by catalyzing the cutting and rejoining of the recombining DNA molecules. The XerC-XerD complex is essential to convert dimers of the bacterial chromosome into monomers to permit their segregation at cell division. It also contributes to the segregational stability of plasmids. In Thermodesulfovibrio yellowstonii (strain ATCC 51303 / DSM 11347 / YP87), this protein is Tyrosine recombinase XerC.